The sequence spans 142 residues: Large ribosomal subunit protein uL16 (142 aa).

This sequence belongs to the universal ribosomal protein uL16 family. Part of the 50S ribosomal subunit.

In terms of biological role, binds 23S rRNA and is also seen to make contacts with the A and possibly P site tRNAs. This is Large ribosomal subunit protein uL16 from Pseudothermotoga lettingae (strain ATCC BAA-301 / DSM 14385 / NBRC 107922 / TMO) (Thermotoga lettingae).